A 443-amino-acid chain; its full sequence is 2-hydroxyethylphosphonate dioxygenase (443 aa).

Residues 8–63 (LAHWMNARKYTAAQTADLAGLPLDDLRRLLGDEANEPDPAAATALAEALSVEPSQL) enclose the HTH cro/C1-type 1 domain. Substrate is bound at residue Lys16. The H-T-H motif DNA-binding region spans 19–38 (AAQTADLAGLPLDDLRRLLG). Residues Tyr98 and Asn126 each coordinate substrate. Residue His129 coordinates Fe cation. Glu176, His182, and Ser196 together coordinate substrate. A Fe cation-binding site is contributed by His182. The HTH cro/C1-type 2 domain maps to 234-290 (VLDLFLARRAHTRTSAAEAAGVPPADLEAALRSPASETGLTVLRTLGRALGFDYRVL). A DNA-binding region (H-T-H motif) is located at residues 245–265 (TRTSAAEAAGVPPADLEAALR).

This sequence belongs to the non-heme iron-dependent dioxygenase family. As to quaternary structure, homodimer. Fe(2+) is required as a cofactor.

The catalysed reaction is 2-hydroxyethylphosphonate + O2 = hydroxymethylphosphonate + formate + H(+). It participates in secondary metabolite biosynthesis; bialaphos biosynthesis. Non-heme-dependent dioxygenase that catalyzes the conversion of 2-hydroxyethylphosphonate (HEP) to hydroxymethylphosphonate (HMP) in the biosynthesis of phosphinothricin tripeptide (PTT), also known as bialaphos (BA), a natural-product antibiotic and potent herbicide. PTT contains the unusual amino acid phosphinothricin attached to 2 alanine residues. Synthetic phosphinothricin (glufosinate) is a key component of commercial herbicides. This chain is 2-hydroxyethylphosphonate dioxygenase (hepD), found in Streptomyces viridochromogenes (strain DSM 40736 / JCM 4977 / BCRC 1201 / Tue 494).